The following is a 769-amino-acid chain: MINIEDISKSSNQSEEKQLKSTSSKPKYSFAAKSLFKGSNNITPYYLSTSNTFQCVASESIQTWLLSDDGHIFTSSGNFVLDVSSGGYFVELVQLNSNSKTQIWTIDTTNNKIQNQGNGKYLDIDNLNICVAPLNGNATQQWTTFRRAPIPTGNWGYFQSKQMDSNNNYWGLSVLNNSKSYNTSVVMNKVQAKSKGQIWQMTNDGHILSRLDGSLVLDIGPSINGSTTNYYLDTNVYKANDLKQQWGINENNQIFNQYYPNLCIGFVGELGVDSTVNCVLAQPSSASDINFQWITNPTYSLNEIVSEVPEPFPAYTSGDLLASYQYLSNIATSNFTDDIRSLYTGINVSLQSFLSIVTNATCPSSIHSTEDFSNVQNQIKTELIYAIDVRLVFENYSGFYSKLFSQGSSNLTNLANLINVDMSSNQMVNANYTDAITSVFYSLISEIPVGGSIIANIGQSAVEWGELISQSNYQGASTYQVELSQLYSHLNTNYENEMANAQSMKDTILQDWGMMSKTYALCFLPTNDPSSLNINGLNFEKISDVASVAYEIAMIQMLLPTTYQIYFTPAGYWVPYSDGDFAYSDNSGTYIMATIEYSNSYPPKELTDKLWNNGVSKQEFFWSAYGWNLATSLTYYNMANKFGNIYKLAFPTIKNFTGVPMQFVMTNDGDNLCNFPVKTHFAKFFSIYYSCGDLGHHYFDIAVNDINDNKVANFTVDINLEAIEGSYVSIKTGSLVVQPGYAVGNPICNQGSYSLMFSASILIPIYKSE.

The segment at 1–22 is disordered; the sequence is MINIEDISKSSNQSEEKQLKST. Ricin B-type lectin domains lie at 25 to 145 and 158 to 296; these read KPKY…WTTF and FQSK…WITN.

Belongs to the cup family.

It localises to the cytoplasm. The protein localises to the membrane. Functionally, may play an important role in stabilizing and/or regulating the cell membrane during Ca(2+) stress or certain stages of development. The chain is Calcium up-regulated protein B (cupB) from Dictyostelium discoideum (Social amoeba).